We begin with the raw amino-acid sequence, 116 residues long: U16-barytoxin-Tl1c (116 aa).

Positions 1 to 20 are cleaved as a signal peptide; that stretch reads MKTIIVFLSLLVLATKFGDA. A propeptide spanning residues 21–74 is cleaved from the precursor; it reads NEGVNQEQMKEVIQNEFREDFLNEMAAMSLLQQLEAIESTLLEKEADRNSRQKR. 3 disulfides stabilise this stretch: C75/C90, C82/C95, and C89/C110.

This sequence belongs to the neurotoxin 14 (magi-1) family. 06 (ICK-Trit) subfamily. Expressed by the venom gland.

The protein localises to the secreted. Ion channel inhibitor. This chain is U16-barytoxin-Tl1c, found in Trittame loki (Brush-footed trapdoor spider).